The chain runs to 393 residues: Probable galacturonosyltransferase-like 8 (393 aa).

At 1–4 the chain is on the cytoplasmic side; the sequence is MSSR. Residues 5–25 traverse the membrane as a helical; Signal-anchor for type II membrane protein segment; sequence FSLTVVCLIALLPFVVGIRLI. At 26–393 the chain is on the lumenal side; that stretch reads PARITSVGDG…SELTDDSSFL (368 aa). N226 carries N-linked (GlcNAc...) asparagine glycosylation.

It belongs to the glycosyltransferase 8 family.

The protein localises to the golgi apparatus membrane. The protein operates within glycan metabolism; pectin biosynthesis. Its function is as follows. May be involved in pectin and/or xylans biosynthesis in cell walls. The polypeptide is Probable galacturonosyltransferase-like 8 (GATL8) (Arabidopsis thaliana (Mouse-ear cress)).